Here is a 634-residue protein sequence, read N- to C-terminus: tRNA uridine 5-carboxymethylaminomethyl modification enzyme MnmG (634 aa).

Residue 14 to 19 participates in FAD binding; it reads GGGHAG. 279–293 lines the NAD(+) pocket; sequence GPRYCPSIEDKVVRF.

This sequence belongs to the MnmG family. In terms of assembly, homodimer. Heterotetramer of two MnmE and two MnmG subunits. FAD is required as a cofactor.

It is found in the cytoplasm. NAD-binding protein involved in the addition of a carboxymethylaminomethyl (cmnm) group at the wobble position (U34) of certain tRNAs, forming tRNA-cmnm(5)s(2)U34. This chain is tRNA uridine 5-carboxymethylaminomethyl modification enzyme MnmG, found in Xanthomonas axonopodis pv. citri (strain 306).